The primary structure comprises 84 residues: Sec-independent protein translocase protein TatA (84 aa).

The helical transmembrane segment at 1–21 threads the bilayer; that stretch reads MGGLQPWHWLIVIAVFVLLFG. The interval 46–84 is disordered; the sequence is MQSDSNAAKSDQPEQITSERVVVDPSTQSTSSNSDKRPA. Residues 48–63 are compositionally biased toward polar residues; the sequence is SDSNAAKSDQPEQITS.

This sequence belongs to the TatA/E family. As to quaternary structure, the Tat system comprises two distinct complexes: a TatABC complex, containing multiple copies of TatA, TatB and TatC subunits, and a separate TatA complex, containing only TatA subunits. Substrates initially bind to the TatABC complex, which probably triggers association of the separate TatA complex to form the active translocon.

The protein localises to the cell membrane. In terms of biological role, part of the twin-arginine translocation (Tat) system that transports large folded proteins containing a characteristic twin-arginine motif in their signal peptide across membranes. TatA could form the protein-conducting channel of the Tat system. This chain is Sec-independent protein translocase protein TatA, found in Mycolicibacterium gilvum (strain PYR-GCK) (Mycobacterium gilvum (strain PYR-GCK)).